The following is a 199-amino-acid chain: RNA pyrophosphohydrolase (199 aa).

One can recognise a Nudix hydrolase domain in the interval 6-154 (GYRPNVGIVL…KREVYELALS (149 aa)). Residues 38–59 (GGIQHGESPEQAMYRELHEEVG) carry the Nudix box motif.

This sequence belongs to the Nudix hydrolase family. RppH subfamily. Requires a divalent metal cation as cofactor.

Its function is as follows. Accelerates the degradation of transcripts by removing pyrophosphate from the 5'-end of triphosphorylated RNA, leading to a more labile monophosphorylated state that can stimulate subsequent ribonuclease cleavage. The protein is RNA pyrophosphohydrolase of Polynucleobacter asymbioticus (strain DSM 18221 / CIP 109841 / QLW-P1DMWA-1) (Polynucleobacter necessarius subsp. asymbioticus).